Here is a 377-residue protein sequence, read N- to C-terminus: Carboxynorspermidine/carboxyspermidine decarboxylase (377 aa).

K41 carries the post-translational modification N6-(pyridoxal phosphate)lysine. 2 residues coordinate substrate: E238 and D274.

This sequence belongs to the Orn/Lys/Arg decarboxylase class-II family. NspC subfamily. In terms of assembly, homodimer. The cofactor is pyridoxal 5'-phosphate.

The protein localises to the cytoplasm. The enzyme catalyses carboxynorspermidine + H(+) = norspermidine + CO2. It carries out the reaction carboxyspermidine + H(+) = spermidine + CO2. Its activity is regulated as follows. Dithiothreitol greatly stimulates activity, maximum stimulation being at 5-20 mM dithiothreitol concentration. Fe(3+), Fe(2+) and Mn(2+) severely inhibit activity (88%, 82% and 50%, respectively), whereas Zn(2+) has a slightly inhibitory effect (23%) and Mg(2+), Ca(2+), Cu(2+) and Cu(+) have no effect. In terms of biological role, catalyzes the decarboxylation of carboxynorspermidine and carboxyspermidine. 2,3-diaminopropionic acid, 2,4-diaminobutyric acid, L-ornithine or L-lysine cannot serve as substrates. The polypeptide is Carboxynorspermidine/carboxyspermidine decarboxylase (Vibrio alginolyticus).